The sequence spans 112 residues: Large ribosomal subunit protein uL22 (112 aa).

It belongs to the universal ribosomal protein uL22 family. Part of the 50S ribosomal subunit.

This protein binds specifically to 23S rRNA; its binding is stimulated by other ribosomal proteins, e.g. L4, L17, and L20. It is important during the early stages of 50S assembly. It makes multiple contacts with different domains of the 23S rRNA in the assembled 50S subunit and ribosome. Its function is as follows. The globular domain of the protein is located near the polypeptide exit tunnel on the outside of the subunit, while an extended beta-hairpin is found that lines the wall of the exit tunnel in the center of the 70S ribosome. The chain is Large ribosomal subunit protein uL22 from Sorangium cellulosum (strain So ce56) (Polyangium cellulosum (strain So ce56)).